A 156-amino-acid chain; its full sequence is Ribosomal RNA large subunit methyltransferase H (156 aa).

Residues Leu-73, Gly-104, and 123–128 contribute to the S-adenosyl-L-methionine site; that span reads LSSLTL.

This sequence belongs to the RNA methyltransferase RlmH family. Homodimer.

Its subcellular location is the cytoplasm. The catalysed reaction is pseudouridine(1915) in 23S rRNA + S-adenosyl-L-methionine = N(3)-methylpseudouridine(1915) in 23S rRNA + S-adenosyl-L-homocysteine + H(+). Specifically methylates the pseudouridine at position 1915 (m3Psi1915) in 23S rRNA. The sequence is that of Ribosomal RNA large subunit methyltransferase H from Bordetella avium (strain 197N).